The following is a 101-amino-acid chain: DET1- and DDB1-associated protein 1 (101 aa).

Residues 67-101 form a disordered region; the sequence is NAAKKRDQDQLEIGETSAPPRKIARTDSQEMNEDT.

It belongs to the DDA1 family. In terms of assembly, component of numerous DCX (DDB1-CUL4-X-box) E3 ubiquitin-protein ligase complexes which consist of a core of DDB1, cullin-4 (CUL4A or CUL4B), DDA1 and RBX1.

It functions in the pathway protein modification; protein ubiquitination. In terms of biological role, functions as a component of numerous distinct DCX (DDB1-CUL4-X-box) E3 ubiquitin-protein ligase complexes which mediate the ubiquitination and subsequent proteasomal degradation of target proteins. In the DCX complexes, acts as a scaffolding subunit required to stabilize the complex. The polypeptide is DET1- and DDB1-associated protein 1 (Xenopus laevis (African clawed frog)).